Consider the following 202-residue polypeptide: Ras-related protein Rab-18 (202 aa).

The GTP site is built by S18, G21, K22, S23, S24, D35, P36, T41, G67, K124, D126, and A153. Residues 38 to 46 (QAATIGVDF) carry the Effector region motif. S-geranylgeranyl cysteine attachment occurs at residues C198 and C200.

Belongs to the small GTPase superfamily. Rab family.

The protein resides in the cell membrane. It catalyses the reaction GTP + H2O = GDP + phosphate + H(+). Its function is as follows. The small GTPases Rab are key regulators of intracellular membrane trafficking, from the formation of transport vesicles to their fusion with membranes. Rabs cycle between an inactive GDP-bound form and an active GTP-bound form that is able to recruit to membranes different sets of downstream effectors directly responsible for vesicle formation, movement, tethering and fusion. In Lymnaea stagnalis (Great pond snail), this protein is Ras-related protein Rab-18 (RAB18A).